Consider the following 122-residue polypeptide: Large ribosomal subunit protein uL14 (122 aa).

The protein belongs to the universal ribosomal protein uL14 family. Part of the 50S ribosomal subunit. Forms a cluster with proteins L3 and L19. In the 70S ribosome, L14 and L19 interact and together make contacts with the 16S rRNA in bridges B5 and B8.

Its function is as follows. Binds to 23S rRNA. Forms part of two intersubunit bridges in the 70S ribosome. The polypeptide is Large ribosomal subunit protein uL14 (Roseiflexus castenholzii (strain DSM 13941 / HLO8)).